Consider the following 160-residue polypeptide: Small ribosomal subunit protein bS6 (160 aa).

The segment at 100-160 is disordered; the sequence is PSSVLARKSD…DDARETAGAE (61 aa). 2 stretches are compositionally biased toward basic and acidic residues: residues 106–116 and 136–160; these read RKSDDRGDRGN and RSSE…AGAE.

This sequence belongs to the bacterial ribosomal protein bS6 family.

Binds together with bS18 to 16S ribosomal RNA. The protein is Small ribosomal subunit protein bS6 of Gluconobacter oxydans (strain 621H) (Gluconobacter suboxydans).